A 429-amino-acid chain; its full sequence is MRDELNKGLIDFLKASPTPFHATATLVQHFEAAGFQRLDERDTWAIETGGRYYVTRNDSSIVAIRMGRQSPLTGGIRMVGAHTDSPCLRVKPQPELQRQGFWQLGVEVYGGALLAPWFDRDLSLAGRVTFRRDGKVESQLIDFKLPIAVIPNLAIHLNRTANEGWTINPQNELPPILAQVAGDERADFRALLTDQLAREHGLNADVVLDYELSFYDTQSAAVVGLNGDFLAGARLDNLLSCFAGMQALLNTESDETALLVCTDHEEVGSSSACGADGAMLEQIVQRLLPSSEDYVRTIQKSLLISADNAHGIHPNYADKHDANHGPKLNAGPVIKVNSNQRYATNSETAGFFRHLCMAEEVPVQSFVVRSDMGCGSTIGPITASHLGIRTVDIGLPTFAMHSIRELAGSHDLAHLVKVLGAFYASHELP.

Residues His-82, His-156, and His-401 each contribute to the Zn(2+) site.

It belongs to the peptidase M18 family. The cofactor is Zn(2+).

The chain is Probable M18 family aminopeptidase 2 from Pseudomonas syringae pv. tomato (strain ATCC BAA-871 / DC3000).